Consider the following 972-residue polypeptide: DNA cross-link repair 1A protein (972 aa).

Residues 14-80 (YKSIRKRKPQ…SEDLDPCKDD (67 aa)) form a disordered region. Positions 23 to 37 (QSNPDSTSVSMQTVT) are enriched in polar residues. The span at 39-54 (GKCRPKRKGSGNRKKS) shows a compositional bias: basic residues. Over residues 64–80 (SEQRLRPSEDLDPCKDD) the composition is skewed to basic and acidic residues. The UBZ4-type zinc-finger motif lies at 105–135 (DGYCPSCQMPFSLLVVQTPRWHVAECLDTPG). Cys-108, Cys-111, His-126, and Cys-130 together coordinate Zn(2+). 2 disordered regions span residues 191 to 219 (KSSC…NNEC) and 552 to 623 (GEAC…TTDE). The segment covering 210 to 219 (NLKNVPNNEC) has biased composition (polar residues).

This sequence belongs to the DNA repair metallo-beta-lactamase (DRMBL) family. Binds PIAS1.

It localises to the nucleus. It catalyses the reaction a beta-lactam + H2O = a substituted beta-amino acid. May be required for DNA interstrand cross-link repair. The chain is DNA cross-link repair 1A protein (DCLRE1A) from Gallus gallus (Chicken).